The following is a 548-amino-acid chain: Putative ATP-dependent RNA helicase R290 (548 aa).

A Helicase ATP-binding domain is found at 38–206; the sequence is INKVINGEDV…CKVLQLKTNE (169 aa). 51–58 is a binding site for ATP; that stretch reads LMTSAGKS. The DEAH box signature appears at 150–153; the sequence is DEAH. The Helicase C-terminal domain occupies 231–376; the sequence is DIVPIINKYP…KTQLALLEQM (146 aa).

It belongs to the DEAD box helicase family. DEAH subfamily.

It catalyses the reaction ATP + H2O = ADP + phosphate + H(+). This is Putative ATP-dependent RNA helicase R290 from Acanthamoeba polyphaga mimivirus (APMV).